The following is a 126-amino-acid chain: uncharacterized protein (126 aa).

This is an uncharacterized protein from Rickettsia prowazekii (strain Madrid E).